Reading from the N-terminus, the 312-residue chain is Malate dehydrogenase (312 aa).

NAD(+) is bound by residues 7–13 (GAAGGIG) and Asp-34. Substrate is bound by residues Arg-81 and Arg-87. Residues Asn-94 and 117-119 (ITN) contribute to the NAD(+) site. The substrate site is built by Asn-119 and Arg-153. His-177 functions as the Proton acceptor in the catalytic mechanism. Met-227 serves as a coordination point for NAD(+).

The protein belongs to the LDH/MDH superfamily. MDH type 1 family. In terms of assembly, homodimer.

The catalysed reaction is (S)-malate + NAD(+) = oxaloacetate + NADH + H(+). In terms of biological role, catalyzes the reversible oxidation of malate to oxaloacetate. In Salmonella arizonae (strain ATCC BAA-731 / CDC346-86 / RSK2980), this protein is Malate dehydrogenase.